Here is a 218-residue protein sequence, read N- to C-terminus: Probable transaldolase (218 aa).

Catalysis depends on Lys84, which acts as the Schiff-base intermediate with substrate.

It belongs to the transaldolase family. Type 3B subfamily.

Its subcellular location is the cytoplasm. It catalyses the reaction D-sedoheptulose 7-phosphate + D-glyceraldehyde 3-phosphate = D-erythrose 4-phosphate + beta-D-fructose 6-phosphate. The protein operates within carbohydrate degradation; pentose phosphate pathway; D-glyceraldehyde 3-phosphate and beta-D-fructose 6-phosphate from D-ribose 5-phosphate and D-xylulose 5-phosphate (non-oxidative stage): step 2/3. Functionally, transaldolase is important for the balance of metabolites in the pentose-phosphate pathway. This Bartonella henselae (strain ATCC 49882 / DSM 28221 / CCUG 30454 / Houston 1) (Rochalimaea henselae) protein is Probable transaldolase.